An 845-amino-acid chain; its full sequence is Translation initiation factor IF-2 (845 aa).

Composition is skewed to basic and acidic residues over residues 139-198 (EAKR…EKPA) and 206-228 (FRSEDRESEQKQRGTKFGRKELH). Residues 139 to 253 (EAKRQAAEEE…PQKAAPAAKH (115 aa)) are disordered. A tr-type G domain is found at 345-512 (SRAAVVTIMG…AILLQAEVME (168 aa)). The segment at 354–361 (GHVDHGKT) is G1. 354-361 (GHVDHGKT) provides a ligand contact to GTP. Residues 379–383 (GITQH) are G2. The segment at 400–403 (DTPG) is G3. GTP contacts are provided by residues 400–404 (DTPGH) and 454–457 (NKID). Positions 454 to 457 (NKID) are G4. The segment at 490–492 (SAK) is G5.

It belongs to the TRAFAC class translation factor GTPase superfamily. Classic translation factor GTPase family. IF-2 subfamily.

It localises to the cytoplasm. Its function is as follows. One of the essential components for the initiation of protein synthesis. Protects formylmethionyl-tRNA from spontaneous hydrolysis and promotes its binding to the 30S ribosomal subunits. Also involved in the hydrolysis of GTP during the formation of the 70S ribosomal complex. The sequence is that of Translation initiation factor IF-2 from Nitrosococcus oceani (strain ATCC 19707 / BCRC 17464 / JCM 30415 / NCIMB 11848 / C-107).